Consider the following 172-residue polypeptide: Protein LHCP TRANSLOCATION DEFECT (172 aa).

The transit peptide at 1–28 (MASIPCTFQLSARASSASAAAAARRSPR) directs the protein to the chloroplast. An ANK repeat occupies 114 to 146 (PVDILLMLAASEGDKPKLEELLRAGAKYDVKDV).

Its subcellular location is the plastid. The protein localises to the chloroplast. Its function is as follows. Involved in the import of light-harvesting complex proteins (LHCP) and subsequent routing of these proteins to the chloroplast signal recognition particle (SRP) pathway. The sequence is that of Protein LHCP TRANSLOCATION DEFECT (LTD) from Oryza sativa subsp. indica (Rice).